We begin with the raw amino-acid sequence, 369 residues long: F-box protein UCC1 (369 aa).

Residues 8–45 (LMDLPLEIHLSLLEYVPNELRAVNKYFYVLHNHSYKEK) enclose the F-box domain.

In terms of assembly, component of the SCF(UCC1) E3 ubiquitin-protein ligase complex composed of CDC53, SKP1, RBX1 and UCC1. Interacts with CIT2. Post-translationally, monoubiquitinated by UBC4.

It participates in protein modification; protein ubiquitination. Its function is as follows. Substrate recognition component of the SKP1-CUL1-F-box protein E3 ubiquitin-protein ligase complex SCF(UCC1) which mediates the ubiquitination and subsequent proteasomal degradation of target proteins. The SCF(UCC1) complex acts as a metabolic switch for the glyoxylate cycle and regulates the level of CIT2 protein to maintain citrate homeostasis. This chain is F-box protein UCC1 (UCC1), found in Saccharomyces cerevisiae (strain ATCC 204508 / S288c) (Baker's yeast).